The sequence spans 403 residues: Major capsid protein (403 aa).

It is found in the virion. Functionally, assembles to form an icosahedral capsid. The sequence is that of Major capsid protein from Staphylococcus aureus.